Consider the following 577-residue polypeptide: MRSHFCTEISEKDVGKTIKVAGWCNTYRDHGGVVFIDLRDKSGLVQLVCDPSSKAYEKALEVRSEFVLVAKGKARLRGPGLENPKLKTGKIEIVLEELVIENKSATPPIEIGNKSVNEDLRLKYRYLDLRSPNSYEIFKLRSEVALITRNTLAQKGFLEIETPILSKTTPEGARDYLVPSRVHEGEFFALPQSPQLFKQLLMVGGMDRYFQIARCFRDEDLRADRQPEFTQIDAEMSFCDENDVMGVVEDLLQAIFKAIGHTISKPFKRMPYKEAMENYGSDKPDLRFKLPLIEVGDCFMDSSNAIFSNIAKDPKNKRIKALNVKGADALFSRSVLKELEEFVRQFGAKGLAYLQIKEDGIKGPLVKFLSEKGLKNILEKTGAKTGDIVFFGAGDKKIVLDYMGRLRLKVAETLDLIDKDALNFLWVVNFPMFEKTENGYHAAHHPFTMPKNIECEDIEEIEAHAYDVVLNGVELGGGSIRIHKEEMQKKVFEKINIHEEEAQKKFGFLLEALKFGAPPHGGFAIGFDRLIMLMTKSHSIRDVIAFPKTQKASCLLTNAPSPINEEQLRELHIRLRK.

Residue Glu171 coordinates L-aspartate. An aspartate region spans residues 195 to 198 (QLFK). Arg217 contacts L-aspartate. Residues 217-219 (RDE) and Gln226 each bind ATP. His444 contacts L-aspartate. ATP is bound at residue Glu474. An L-aspartate-binding site is contributed by Arg481. 526–529 (GFDR) is an ATP binding site.

The protein belongs to the class-II aminoacyl-tRNA synthetase family. Type 1 subfamily. As to quaternary structure, homodimer.

The protein resides in the cytoplasm. It catalyses the reaction tRNA(Asx) + L-aspartate + ATP = L-aspartyl-tRNA(Asx) + AMP + diphosphate. Aspartyl-tRNA synthetase with relaxed tRNA specificity since it is able to aspartylate not only its cognate tRNA(Asp) but also tRNA(Asn). Reaction proceeds in two steps: L-aspartate is first activated by ATP to form Asp-AMP and then transferred to the acceptor end of tRNA(Asp/Asn). This Helicobacter pylori (strain G27) protein is Aspartate--tRNA(Asp/Asn) ligase.